A 397-amino-acid chain; its full sequence is 3-ketoacyl-CoA thiolase, mitochondrial (397 aa).

The transit peptide at 1–16 directs the protein to the mitochondrion; not cleaved; sequence MALLRGVFIVAAKRTP. Lys-25 bears the N6-acetyllysine; alternate mark. Lys-25 is modified (N6-succinyllysine; alternate). The Acyl-thioester intermediate role is filled by Cys-92. A Phosphothreonine modification is found at Thr-119. At Ser-121 the chain carries Phosphoserine. At Tyr-127 the chain carries Phosphotyrosine. Position 136 is a phosphothreonine (Thr-136). Lys-137 is subject to N6-acetyllysine; alternate. Position 137 is an N6-succinyllysine; alternate (Lys-137). The residue at position 140 (Ser-140) is a Phosphoserine. N6-acetyllysine; alternate is present on residues Lys-143, Lys-171, Lys-191, and Lys-209. 4 positions are modified to N6-succinyllysine; alternate: Lys-143, Lys-171, Lys-191, and Lys-209. Residues Lys-212 and Lys-214 each carry the N6-succinyllysine modification. Residues Arg-224 and Thr-227 each coordinate CoA. The residue at position 234 (Lys-234) is an N6-acetyllysine; alternate. Lys-234 carries the post-translational modification N6-succinyllysine; alternate. N6-succinyllysine is present on Lys-240. Lys-241 is subject to N6-acetyllysine. Ser-251 lines the CoA pocket. N6-acetyllysine is present on residues Lys-269 and Lys-270. Lys-305 is modified (N6-acetyllysine; alternate). The residue at position 305 (Lys-305) is an N6-succinyllysine; alternate. Ser-310 carries the phosphoserine modification. Lys-312 bears the N6-acetyllysine; alternate mark. Position 312 is an N6-succinyllysine; alternate (Lys-312). At Ser-333 the chain carries Phosphoserine. Lys-340 and Lys-375 each carry N6-acetyllysine. Cys-382 acts as the Proton donor/acceptor in catalysis.

Belongs to the thiolase-like superfamily. Thiolase family. As to quaternary structure, homotetramer. Interacts with BNIP3.

It is found in the mitochondrion. It catalyses the reaction an acyl-CoA + acetyl-CoA = a 3-oxoacyl-CoA + CoA. The catalysed reaction is 2 acetyl-CoA = acetoacetyl-CoA + CoA. The enzyme catalyses acetyl-CoA + H2O = acetate + CoA + H(+). It carries out the reaction propanoyl-CoA + H2O = propanoate + CoA + H(+). It catalyses the reaction butanoyl-CoA + H2O = butanoate + CoA + H(+). The catalysed reaction is hexanoyl-CoA + H2O = hexanoate + CoA + H(+). The enzyme catalyses octanoyl-CoA + H2O = octanoate + CoA + H(+). It carries out the reaction decanoyl-CoA + H2O = decanoate + CoA + H(+). It catalyses the reaction dodecanoyl-CoA + H2O = dodecanoate + CoA + H(+). The catalysed reaction is tetradecanoyl-CoA + H2O = tetradecanoate + CoA + H(+). The enzyme catalyses hexadecanoyl-CoA + H2O = hexadecanoate + CoA + H(+). It functions in the pathway lipid metabolism; fatty acid beta-oxidation. In the production of energy from fats, this is one of the enzymes that catalyzes the last step of the mitochondrial beta-oxidation pathway, an aerobic process breaking down fatty acids into acetyl-CoA. Using free coenzyme A/CoA, catalyzes the thiolytic cleavage of medium- to long-chain unbranched 3-oxoacyl-CoAs into acetyl-CoA and a fatty acyl-CoA shortened by two carbon atoms. Also catalyzes the condensation of two acetyl-CoA molecules into acetoacetyl-CoA and could be involved in the production of ketone bodies. Also displays hydrolase activity on various fatty acyl-CoAs. Thereby, could be responsible for the production of acetate in a side reaction to beta-oxidation. Abolishes BNIP3-mediated apoptosis and mitochondrial damage. The chain is 3-ketoacyl-CoA thiolase, mitochondrial (ACAA2) from Bos taurus (Bovine).